We begin with the raw amino-acid sequence, 118 residues long: uncharacterized protein (118 aa).

Helical transmembrane passes span valine 7–glutamate 27 and valine 34–phenylalanine 58.

Its subcellular location is the membrane. This is an uncharacterized protein from Saccharomyces cerevisiae (strain ATCC 204508 / S288c) (Baker's yeast).